The sequence spans 170 residues: Protein SprT (170 aa).

Residues 22–163 (LQQANLTLQT…RCRRCGKTLR (142 aa)) enclose the SprT-like domain. Histidine 78 is a Zn(2+) binding site. Residue glutamate 79 is part of the active site. Histidine 82 contributes to the Zn(2+) binding site.

Belongs to the SprT family. Zn(2+) serves as cofactor.

The protein resides in the cytoplasm. The sequence is that of Protein SprT from Pectobacterium atrosepticum (strain SCRI 1043 / ATCC BAA-672) (Erwinia carotovora subsp. atroseptica).